Reading from the N-terminus, the 108-residue chain is MDTIAFRMVLNRGMRDEYERRHREIWPELVSKLHNAGVRDYRIFLDDDTHHLFAVLTRTADHSMERLPELAVMRKWWDYMADIMQTAPDRTPLQQALIPLFELQHPSN.

Position 18 (tyrosine 18) interacts with substrate. Residue histidine 22 is the Proton donor of the active site. Substrate-binding positions include tyrosine 41 and 76 to 77; that span reads WW.

Belongs to the rhamnose mutarotase family. Homodimer.

The protein resides in the cytoplasm. It carries out the reaction alpha-L-rhamnose = beta-L-rhamnose. It participates in carbohydrate metabolism; L-rhamnose metabolism. Its function is as follows. Involved in the anomeric conversion of L-rhamnose. The protein is L-rhamnose mutarotase of Paraburkholderia phymatum (strain DSM 17167 / CIP 108236 / LMG 21445 / STM815) (Burkholderia phymatum).